We begin with the raw amino-acid sequence, 887 residues long: Pre-mRNA-splicing factor cwf22 (887 aa).

The segment at Met1–Arg27 is disordered. Residues Lys124–Lys307 enclose the MIF4G domain. The disordered stretch occupies residues Ile366–Val401. Residues Gly368–Val394 show a composition bias toward acidic residues. The MI domain maps to Asn411–Leu527. Disordered stretches follow at residues Met607 to His834 and Gly867 to Asp887. Positions Glu618–Ser662 are enriched in low complexity. Ser662 is subject to Phosphoserine. The residue at position 664 (Thr664) is a Phosphothreonine. The segment covering Lys677–Ser690 has biased composition (basic and acidic residues). Low complexity predominate over residues Asn691–Tyr712. The segment covering Arg717 to Tyr726 has biased composition (basic and acidic residues). The segment covering Arg736–Arg746 has biased composition (basic residues). Low complexity-rich tracts occupy residues Ser747 to Pro762 and Ser769 to Pro791. The segment covering Asp799–Pro809 has biased composition (polar residues).

It belongs to the CWC22 family. Belongs to the 40S cdc5-associated complex (or cwf complex), a spliceosome sub-complex reminiscent of a late-stage spliceosome composed of the U2, U5 and U6 snRNAs and at least brr2, cdc5, cwf2/prp3, cwf3/syf1, cwf4/syf3, cwf5/ecm2, spp42/cwf6, cwf7/spf27, cwf8, cwf9, cwf10, cwf11, cwf12, prp45/cwf13, cwf14, cwf15, cwf16, cwf17, cwf18, cwf19, cwf20, cwf21, cwf22, cwf23, cwf24, cwf25, cwf26, cyp7/cwf27, cwf28, cwf29/ist3, lea1, msl1, prp5/cwf1, prp10, prp12/sap130, prp17, prp22, sap61, sap62, sap114, sap145, slu7, smb1, smd1, smd3, smf1, smg1 and syf2.

The protein localises to the cytoplasm. It localises to the nucleus. Functionally, may be involved in pre-mRNA splicing. The sequence is that of Pre-mRNA-splicing factor cwf22 (cwf22) from Schizosaccharomyces pombe (strain 972 / ATCC 24843) (Fission yeast).